Consider the following 142-residue polypeptide: Large-conductance mechanosensitive channel (142 aa).

Helical transmembrane passes span 10–30 (FAVKGNVVDLAVGVIIGGAFG), 40–60 (LIMPVVGLVFGKLDFSNLFVV), and 86–106 (GNFITVAVNFIILAFIIFMMV).

This sequence belongs to the MscL family. As to quaternary structure, homopentamer.

The protein localises to the cell inner membrane. Its function is as follows. Channel that opens in response to stretch forces in the membrane lipid bilayer. May participate in the regulation of osmotic pressure changes within the cell. This chain is Large-conductance mechanosensitive channel, found in Delftia acidovorans (strain DSM 14801 / SPH-1).